We begin with the raw amino-acid sequence, 229 residues long: Cytidylate kinase (229 aa).

10–18 (GPAGSGKST) provides a ligand contact to ATP.

The protein belongs to the cytidylate kinase family. Type 1 subfamily.

It is found in the cytoplasm. The catalysed reaction is CMP + ATP = CDP + ADP. It carries out the reaction dCMP + ATP = dCDP + ADP. This chain is Cytidylate kinase, found in Leptospira interrogans serogroup Icterohaemorrhagiae serovar Lai (strain 56601).